We begin with the raw amino-acid sequence, 148 residues long: Large ribosomal subunit protein bL9 (148 aa).

The protein belongs to the bacterial ribosomal protein bL9 family.

In terms of biological role, binds to the 23S rRNA. The chain is Large ribosomal subunit protein bL9 from Bacillus cereus (strain G9842).